The following is a 436-amino-acid chain: Probable D-serine dehydratase (436 aa).

Lys111 bears the N6-(pyridoxal phosphate)lysine mark.

This sequence belongs to the serine/threonine dehydratase family. DsdA subfamily. The cofactor is pyridoxal 5'-phosphate.

The enzyme catalyses D-serine = pyruvate + NH4(+). This Lactiplantibacillus plantarum (strain ATCC BAA-793 / NCIMB 8826 / WCFS1) (Lactobacillus plantarum) protein is Probable D-serine dehydratase.